Reading from the N-terminus, the 424-residue chain is MEGTAPPTPYDPASVARYAPEPDKRPGRTAFQRDRARILHSGALRRLAGKTQVVAPGEGSPVWDASPRTRLTHSLECAQVGRELGAALGCDPDLVEAACLAHDLGHPPFGHNGEQALNAFAEDCGGFEGNAQSLRLLTRIEPKRFTEDGSVGLNLTRATLDAATKYPWPRGAHPAVPASPKFGVYDDDRPVFAWLREDAPGARTCFEAQVMDWADDVAYSVHDVEDGLHAGHIDPNCLLADPEREAVFDAAVGRFVPAGTDHAELAAALDRLLAQDWWPHGYDGSAPAQARLKDATSQLIGRFCLAAEAATRAAYGDGRLTRYAAELVVPRETRMECAVLKAVAVRYVMQRTEQERLRADQRIVVAELAEALTARAPDGLDPQFRALFDAAADDRARKRVVVDQIASLTDASARSLHARLTGHP.

The span at 1 to 10 (MEGTAPPTPY) shows a compositional bias: pro residues. Residues 1–31 (MEGTAPPTPYDPASVARYAPEPDKRPGRTAF) form a disordered region. A compositionally biased stretch (basic and acidic residues) spans 20–31 (PEPDKRPGRTAF). The HD domain maps to 70-220 (RLTHSLECAQ…MDWADDVAYS (151 aa)).

This sequence belongs to the dGTPase family. Type 2 subfamily.

This chain is Deoxyguanosinetriphosphate triphosphohydrolase-like protein, found in Streptomyces coelicolor (strain ATCC BAA-471 / A3(2) / M145).